Consider the following 482-residue polypeptide: Glutamyl-tRNA(Gln) amidotransferase subunit A (482 aa).

Catalysis depends on charge relay system residues Lys-75 and Ser-150. Ser-174 functions as the Acyl-ester intermediate in the catalytic mechanism.

This sequence belongs to the amidase family. GatA subfamily. As to quaternary structure, heterotrimer of A, B and C subunits.

It catalyses the reaction L-glutamyl-tRNA(Gln) + L-glutamine + ATP + H2O = L-glutaminyl-tRNA(Gln) + L-glutamate + ADP + phosphate + H(+). Allows the formation of correctly charged Gln-tRNA(Gln) through the transamidation of misacylated Glu-tRNA(Gln) in organisms which lack glutaminyl-tRNA synthetase. The reaction takes place in the presence of glutamine and ATP through an activated gamma-phospho-Glu-tRNA(Gln). This is Glutamyl-tRNA(Gln) amidotransferase subunit A from Acaryochloris marina (strain MBIC 11017).